The primary structure comprises 275 residues: Proteasome subunit beta (275 aa).

Residues 1-52 (MQDTTANQVAANATSSFTEHLQRNRPGLLPYNQPFPAALTGAGSQPLQVPHA) constitute a propeptide, removed in mature form; by autocatalysis. Catalysis depends on T53, which acts as the Nucleophile.

This sequence belongs to the peptidase T1B family. The 20S proteasome core is composed of 14 alpha and 14 beta subunits that assemble into four stacked heptameric rings, resulting in a barrel-shaped structure. The two inner rings, each composed of seven catalytic beta subunits, are sandwiched by two outer rings, each composed of seven alpha subunits. The catalytic chamber with the active sites is on the inside of the barrel. Has a gated structure, the ends of the cylinder being occluded by the N-termini of the alpha-subunits. Is capped by the proteasome-associated ATPase, ARC.

It is found in the cytoplasm. It catalyses the reaction Cleavage of peptide bonds with very broad specificity.. It functions in the pathway protein degradation; proteasomal Pup-dependent pathway. With respect to regulation, the formation of the proteasomal ATPase ARC-20S proteasome complex, likely via the docking of the C-termini of ARC into the intersubunit pockets in the alpha-rings, may trigger opening of the gate for substrate entry. Interconversion between the open-gate and close-gate conformations leads to a dynamic regulation of the 20S proteasome proteolysis activity. Component of the proteasome core, a large protease complex with broad specificity involved in protein degradation. The protein is Proteasome subunit beta of Arthrobacter sp. (strain FB24).